Here is a 106-residue protein sequence, read N- to C-terminus: MAQAIGPRLYSCCNCRNHVGLHDDIISKAFQGRTGRAFLFSHAMNIVVGPKEDRNLLTGLHTVADISCVDCNEPLGWKYERAYETSQKYKEGKFIFEKAKIVKEDW.

Residues 8–105 (RLYSCCNCRN…FEKAKIVKED (98 aa)) enclose the Yippee domain. Zn(2+)-binding residues include Cys-12, Cys-15, Cys-68, and Cys-71.

It belongs to the yippee family.

This Arabidopsis thaliana (Mouse-ear cress) protein is Protein yippee-like At4g27745.